We begin with the raw amino-acid sequence, 1108 residues long: Valine--tRNA ligase, mitochondrial 1 (1108 aa).

The N-terminal 46 residues, 1–46, are a transit peptide targeting the mitochondrion; it reads MSLLFLRRAKPLFVSCCSATHSRSSFLSPTLTNQLVRSFHGSRTMS. Residues 57 to 93 show a composition bias toward basic and acidic residues; that stretch reads ELERKKKKEEKAKEKELKKQKALEKERLAELKAKQAK. Positions 57–138 are disordered; sequence ELERKKKKEE…RKRLSSQMAK (82 aa). The short motif at 177–187 is the 'HIGH' region element; that stretch reads PNVTGALHIGH. The 'KMSKS' region signature appears at 695-699; sequence KMSKS. K698 contacts ATP. Residues 1032-1064 are a coiled coil; it reads AINTEAEQEKIRNKIGELQKQKEKLQKMMSVST.

This sequence belongs to the class-I aminoacyl-tRNA synthetase family.

The protein resides in the mitochondrion. Its subcellular location is the cytoplasm. It is found in the cytosol. The catalysed reaction is tRNA(Val) + L-valine + ATP = L-valyl-tRNA(Val) + AMP + diphosphate. Its function is as follows. Required for embryo development and seed viability. This chain is Valine--tRNA ligase, mitochondrial 1, found in Arabidopsis thaliana (Mouse-ear cress).